We begin with the raw amino-acid sequence, 104 residues long: L-rhamnose mutarotase (104 aa).

Tyrosine 18 provides a ligand contact to substrate. Histidine 22 serves as the catalytic Proton donor. Substrate-binding positions include tyrosine 41 and 76–77; that span reads WW.

The protein belongs to the rhamnose mutarotase family. Homodimer.

The protein resides in the cytoplasm. It carries out the reaction alpha-L-rhamnose = beta-L-rhamnose. It participates in carbohydrate metabolism; L-rhamnose metabolism. In terms of biological role, involved in the anomeric conversion of L-rhamnose. The sequence is that of L-rhamnose mutarotase from Lachnoclostridium phytofermentans (strain ATCC 700394 / DSM 18823 / ISDg) (Clostridium phytofermentans).